We begin with the raw amino-acid sequence, 219 residues long: ATP-dependent Clp protease proteolytic subunit 3 (219 aa).

Ser-112 (nucleophile) is an active-site residue. His-137 is an active-site residue.

This sequence belongs to the peptidase S14 family. As to quaternary structure, fourteen ClpP subunits assemble into 2 heptameric rings which stack back to back to give a disk-like structure with a central cavity, resembling the structure of eukaryotic proteasomes.

The protein localises to the cytoplasm. The catalysed reaction is Hydrolysis of proteins to small peptides in the presence of ATP and magnesium. alpha-casein is the usual test substrate. In the absence of ATP, only oligopeptides shorter than five residues are hydrolyzed (such as succinyl-Leu-Tyr-|-NHMec, and Leu-Tyr-Leu-|-Tyr-Trp, in which cleavage of the -Tyr-|-Leu- and -Tyr-|-Trp bonds also occurs).. In terms of biological role, cleaves peptides in various proteins in a process that requires ATP hydrolysis. Has a chymotrypsin-like activity. Plays a major role in the degradation of misfolded proteins. The sequence is that of ATP-dependent Clp protease proteolytic subunit 3 from Streptomyces avermitilis (strain ATCC 31267 / DSM 46492 / JCM 5070 / NBRC 14893 / NCIMB 12804 / NRRL 8165 / MA-4680).